A 145-amino-acid chain; its full sequence is Protein H2A.5 (145 aa).

The interval 118–145 is disordered; it reads SPAAAEKEAKSQKAAAKSPKKKTAATKE. An SPKK motif motif is present at residues 135–138; it reads SPKK. The span at 135-145 shows a compositional bias: basic residues; sequence SPKKKTAATKE.

It belongs to the histone H2A family. The nucleosome is a histone octamer containing two molecules each of H2A, H2B, H3 and H4 assembled in one H3-H4 heterotetramer and two H2A-H2B heterodimers. The octamer wraps approximately 147 bp of DNA. In terms of tissue distribution, abundant in meristematic tissues.

It localises to the nucleus. Its subcellular location is the chromosome. In terms of biological role, core component of nucleosome. Nucleosomes wrap and compact DNA into chromatin, limiting DNA accessibility to the cellular machineries which require DNA as a template. Histones thereby play a central role in transcription regulation, DNA repair, DNA replication and chromosomal stability. DNA accessibility is regulated via a complex set of post-translational modifications of histones, also called histone code, and nucleosome remodeling. The polypeptide is Protein H2A.5 (H2A-2) (Triticum aestivum (Wheat)).